The chain runs to 77 residues: Small ribosomal subunit protein uS17 (77 aa).

The protein belongs to the universal ribosomal protein uS17 family. In terms of assembly, part of the 30S ribosomal subunit.

Functionally, one of the primary rRNA binding proteins, it binds specifically to the 5'-end of 16S ribosomal RNA. The chain is Small ribosomal subunit protein uS17 from Rickettsia canadensis (strain McKiel).